A 185-amino-acid chain; its full sequence is Dirigent protein 12 (185 aa).

Residues 1-25 (MTNQIYKQVFSFFLSVLLLQSSTVS) form the signal peptide. Cys-37 and Cys-184 are disulfide-bonded. 2 N-linked (GlcNAc...) asparagine glycosylation sites follow: Asn-56 and Asn-120.

Belongs to the plant dirigent protein family. Homodimer. In terms of tissue distribution, seed coat specific expression.

It localises to the secreted. The protein localises to the extracellular space. Its subcellular location is the apoplast. Dirigent proteins impart stereoselectivity on the phenoxy radical-coupling reaction, yielding optically active lignans from two molecules of coniferyl alcohol in the biosynthesis of lignans, flavonolignans, and alkaloids and thus plays a central role in plant secondary metabolism. Required for seed accumulation of neolignans. The protein is Dirigent protein 12 (DIR12) of Arabidopsis thaliana (Mouse-ear cress).